The sequence spans 119 residues: Large ribosomal subunit protein uL18 (119 aa).

Belongs to the universal ribosomal protein uL18 family. As to quaternary structure, part of the 50S ribosomal subunit; part of the 5S rRNA/L5/L18/L25 subcomplex. Contacts the 5S and 23S rRNAs.

In terms of biological role, this is one of the proteins that bind and probably mediate the attachment of the 5S RNA into the large ribosomal subunit, where it forms part of the central protuberance. This is Large ribosomal subunit protein uL18 from Micrococcus luteus (Micrococcus lysodeikticus).